The primary structure comprises 1077 residues: Ubiquitin carboxyl-terminal hydrolase 28 (1077 aa).

A disordered region spans residues 60 to 80 (DERVKEPSQDTVATEPSEVEG). Serine 67 is modified (phosphoserine). The region spanning 97-116 (DNKDDLQAAIALSLLESPKI) is the UIM domain. Residue lysine 99 forms a Glycyl lysine isopeptide (Lys-Gly) (interchain with G-Cter in SUMO2) linkage. The USP domain maps to 162 to 650 (VGLKNVGNTC…SAYCLMYIND (489 aa)). Cysteine 171 acts as the Nucleophile in catalysis. Serine 375 bears the Phosphoserine mark. A disordered region spans residues 477–535 (HCSVSDQTSKESTSTESSSQDVESTFSSPEDSLPKSKPLTSSRSSMEMPSQPAPRTVTD). The segment covering 481-501 (SDQTSKESTSTESSSQDVEST) has biased composition (low complexity). Residues 514–524 (PLTSSRSSMEM) are compositionally biased toward polar residues. Serine 550 is subject to Phosphoserine. Residue histidine 600 is the Proton acceptor of the active site. A disordered region spans residues 697 to 728 (EEQSCKIPQMESSTNSSSQDYSTSQEPSVASS). Over residues 707 to 724 (ESSTNSSSQDYSTSQEPS) the composition is skewed to low complexity. Phosphoserine is present on serine 714. Lysine 759 is covalently cross-linked (Glycyl lysine isopeptide (Lys-Gly) (interchain with G-Cter in SUMO2)). A Phosphothreonine modification is found at threonine 1048.

The protein belongs to the peptidase C19 family. USP28 subfamily. In terms of assembly, interacts with ZNF304. Interacts with PRKD1. Interacts with TP53BP1. Interacts with isoform 1 of FBXW7; following DNA damage, dissociates from FBXW7 leading to degradation of MYC. Post-translationally, degraded upon nickel ion level or hypoxia exposure. In terms of processing, phosphorylated upon DNA damage at Ser-67 and Ser-714, by ATM or ATR. Phosphorylated by PRKD1.

It is found in the nucleus. The protein resides in the nucleoplasm. The enzyme catalyses Thiol-dependent hydrolysis of ester, thioester, amide, peptide and isopeptide bonds formed by the C-terminal Gly of ubiquitin (a 76-residue protein attached to proteins as an intracellular targeting signal).. Deubiquitinase involved in DNA damage response checkpoint and MYC proto-oncogene stability. Involved in DNA damage induced apoptosis by specifically deubiquitinating proteins of the DNA damage pathway such as CLSPN. Also involved in G2 DNA damage checkpoint, by deubiquitinating CLSPN, and preventing its degradation by the anaphase promoting complex/cyclosome (APC/C). In contrast, it does not deubiquitinate PLK1. Specifically deubiquitinates MYC in the nucleoplasm, leading to prevent MYC degradation by the proteasome: acts by specifically interacting with isoform 1 of FBXW7 (FBW7alpha) in the nucleoplasm and counteracting ubiquitination of MYC by the SCF(FBW7) complex. In contrast, it does not interact with isoform 4 of FBXW7 (FBW7gamma) in the nucleolus, allowing MYC degradation and explaining the selective MYC degradation in the nucleolus. Deubiquitinates ZNF304, hence preventing ZNF304 degradation by the proteasome and leading to the activated KRAS-mediated promoter hypermethylation and transcriptional silencing of tumor suppressor genes (TSGs) in a subset of colorectal cancers (CRC) cells. This Homo sapiens (Human) protein is Ubiquitin carboxyl-terminal hydrolase 28 (USP28).